Here is a 371-residue protein sequence, read N- to C-terminus: Aspartate-semialdehyde dehydrogenase (371 aa).

NADP(+)-binding positions include 9 to 12 (RGMV), 37 to 38 (TS), and Q73. R102 lines the phosphate pocket. The active-site Acyl-thioester intermediate is C135. Residue Q162 coordinates substrate. NADP(+)-binding positions include 165–166 (SG) and P193. E241 lines the substrate pocket. K244 contributes to the phosphate binding site. R268 serves as a coordination point for substrate. Catalysis depends on H275, which acts as the Proton acceptor. Q351 provides a ligand contact to NADP(+).

The protein belongs to the aspartate-semialdehyde dehydrogenase family. Homodimer.

It carries out the reaction L-aspartate 4-semialdehyde + phosphate + NADP(+) = 4-phospho-L-aspartate + NADPH + H(+). It functions in the pathway amino-acid biosynthesis; L-lysine biosynthesis via DAP pathway; (S)-tetrahydrodipicolinate from L-aspartate: step 2/4. Its pathway is amino-acid biosynthesis; L-methionine biosynthesis via de novo pathway; L-homoserine from L-aspartate: step 2/3. It participates in amino-acid biosynthesis; L-threonine biosynthesis; L-threonine from L-aspartate: step 2/5. Catalyzes the NADPH-dependent formation of L-aspartate-semialdehyde (L-ASA) by the reductive dephosphorylation of L-aspartyl-4-phosphate. This Neisseria meningitidis serogroup B (strain ATCC BAA-335 / MC58) protein is Aspartate-semialdehyde dehydrogenase.